The sequence spans 276 residues: Elongation factor Ts, mitochondrial (276 aa).

The protein belongs to the EF-Ts family.

The protein resides in the mitochondrion. Functionally, associates with the EF-Tu.GDP complex and induces the exchange of GDP to GTP. It remains bound to the aminoacyl-tRNA.EF-Tu.GTP complex up to the GTP hydrolysis stage on the ribosome. This is Elongation factor Ts, mitochondrial from Leishmania major.